A 556-amino-acid polypeptide reads, in one-letter code: Polypeptide N-acetylgalactosaminyltransferase 13 (556 aa).

The Cytoplasmic segment spans residues 1-4 (MRRL). A helical; Signal-anchor for type II membrane protein membrane pass occupies residues 5-27 (VYCKVVLATSLMWVLVDVFLLLY). At 28-556 (FSECNKCDDK…WLLRNMTLGT (529 aa)) the chain is on the lumenal side. Residues N94 and N116 are each glycosylated (N-linked (GlcNAc...) asparagine). Cystine bridges form between C105–C338, C329–C407, C441–C458, C481–C496, and C522–C539. Residues 114 to 224 (LPNTSVVIVF…LGWLEPLLAR (111 aa)) are catalytic subdomain A. D155 and R185 together coordinate substrate. Positions 208 and 210 each coordinate Mn(2+). Residues 284–346 (PVRTPTMAGG…TCSHVGHVFR (63 aa)) are catalytic subdomain B. W315 serves as a coordination point for substrate. H343 contacts Mn(2+). Substrate-binding residues include R346 and Y351. The Ricin B-type lectin domain maps to 428–550 (YSLGEIRNVE…GSRSQQWLLR (123 aa)). N-linked (GlcNAc...) asparagine glycosylation occurs at N551.

It belongs to the glycosyltransferase 2 family. GalNAc-T subfamily. It depends on Mn(2+) as a cofactor.

The protein resides in the golgi apparatus membrane. The enzyme catalyses L-seryl-[protein] + UDP-N-acetyl-alpha-D-galactosamine = a 3-O-[N-acetyl-alpha-D-galactosaminyl]-L-seryl-[protein] + UDP + H(+). It carries out the reaction L-threonyl-[protein] + UDP-N-acetyl-alpha-D-galactosamine = a 3-O-[N-acetyl-alpha-D-galactosaminyl]-L-threonyl-[protein] + UDP + H(+). It functions in the pathway protein modification; protein glycosylation. Catalyzes the initial reaction in O-linked oligosaccharide biosynthesis, the transfer of an N-acetyl-D-galactosamine (GalNAc) residue from UDP-GalNAc to a serine or threonine residue on the protein receptor. Generates GalNAc-O-Ser/Thr structure also known as Tn antigen, which itself is immunogenic but also serves as a precursor for the synthesis of different mucin-type O-glycan core structures. Contributes to the synthesis of O-linked glycans on mucins and proteoglycans of the central nervous system. Can glycosylate both unmodified peptides and glycopeptides that already contain an O-linked GalNAc sugar. Transfers GalNAc to Thr-/Ser-rich tandem repeats GTTPSPVPTTSTTSAP of MUC5AC. Transfers GalNAc to three consecutive serine/threonine residues on SDC3 forming a triplet-Tn epitope expressed in Purkinje cells of the developing brain. May promote neurogenesis through glycosylation and stabilization of PDPN. This chain is Polypeptide N-acetylgalactosaminyltransferase 13 (Galnt13), found in Rattus norvegicus (Rat).